Consider the following 290-residue polypeptide: Enoyl-CoA hydratase, mitochondrial (290 aa).

Residues 1-27 (MAALRALLPRACSSLLSSVRCPELRRF) constitute a mitochondrion transit peptide. Residue 98-101 (ADIK) participates in substrate binding. At lysine 101 the chain carries N6-acetyllysine; alternate. An N6-succinyllysine; alternate modification is found at lysine 101. Position 114 is a phosphoserine (serine 114). Lysine 115 bears the N6-acetyllysine; alternate mark. N6-succinyllysine; alternate is present on lysine 115. Glycine 141 is a binding site for substrate. Lysine 204 bears the N6-succinyllysine mark. Lysine 211 is modified (N6-acetyllysine). An N6-acetyllysine; alternate modification is found at lysine 217. Lysine 217 is subject to N6-succinyllysine; alternate.

It belongs to the enoyl-CoA hydratase/isomerase family. Homohexamer; dimer of trimers. In terms of processing, acetylation of Lys-101 is observed in liver mitochondria from fasted mice but not from fed mice.

The protein resides in the mitochondrion matrix. It carries out the reaction a (3S)-3-hydroxyacyl-CoA = a (2E)-enoyl-CoA + H2O. It catalyses the reaction a (3E)-enoyl-CoA = a 4-saturated (2E)-enoyl-CoA. The enzyme catalyses (3E)-hexenoyl-CoA = (2E)-hexenoyl-CoA. The catalysed reaction is (3S)-3-hydroxybutanoyl-CoA = (2E)-butenoyl-CoA + H2O. It carries out the reaction 3-hydroxyisovaleryl-CoA = 3-methylbut-2-enoyl-CoA + H2O. It catalyses the reaction 3-hydroxypropanoyl-CoA = acryloyl-CoA + H2O. The enzyme catalyses 3-hydroxybutanoyl-CoA = (2E)-butenoyl-CoA + H2O. The catalysed reaction is 2-methylpropenoyl-CoA + H2O = (S)-3-hydroxyisobutanoyl-CoA. It carries out the reaction (3S)-hydroxyhexanoyl-CoA = (2E)-hexenoyl-CoA + H2O. It catalyses the reaction (3S)-hydroxydecanoyl-CoA = (2E)-decenoyl-CoA + H2O. It participates in lipid metabolism; fatty acid beta-oxidation. In terms of biological role, converts unsaturated trans-2-enoyl-CoA species ((2E)-enoyl-CoA) to the corresponding (3S)-3-hydroxyacyl-CoA species through addition of a water molecule to the double bond. Catalyzes the hydration of medium- and short-chained fatty enoyl-CoA thioesters from 4 carbons long (C4) up to C16. Has high substrate specificity for crotonyl-CoA ((2E)-butenoyl-CoA) and moderate specificity for acryloyl-CoA, 3-methylcrotonyl-CoA (3-methyl-(2E)-butenoyl-CoA) and methacrylyl-CoA ((2E)-2-methylpropenoyl-CoA). Can bind tiglyl-CoA (2-methylcrotonoyl-CoA), but hydrates only a small amount of this substrate. Plays a key role in the beta-oxidation spiral of short- and medium-chain fatty acid oxidation. At a lower rate than the hydratase reaction, catalyzes the isomerase reaction of trans-3-enoyl-CoA species (such as (3E)-hexenoyl-CoA) to trans-2-enoyl-CoA species (such as (2E)-hexenoyl-CoA), which are subsequently hydrated to 3(S)-3-hydroxyacyl-CoA species (such as (3S)-hydroxyhexanoyl-CoA). This chain is Enoyl-CoA hydratase, mitochondrial, found in Mus musculus (Mouse).